The sequence spans 595 residues: Elongation factor 4 (595 aa).

Positions 2 to 184 constitute a tr-type G domain; it reads SHIRNFSIIA…RLVATIPPPT (183 aa). GTP is bound by residues 14–19 and 131–134; these read DHGKST and NKMD.

This sequence belongs to the TRAFAC class translation factor GTPase superfamily. Classic translation factor GTPase family. LepA subfamily.

It is found in the cell inner membrane. It catalyses the reaction GTP + H2O = GDP + phosphate + H(+). Its function is as follows. Required for accurate and efficient protein synthesis under certain stress conditions. May act as a fidelity factor of the translation reaction, by catalyzing a one-codon backward translocation of tRNAs on improperly translocated ribosomes. Back-translocation proceeds from a post-translocation (POST) complex to a pre-translocation (PRE) complex, thus giving elongation factor G a second chance to translocate the tRNAs correctly. Binds to ribosomes in a GTP-dependent manner. This is Elongation factor 4 from Pseudomonas syringae pv. tomato (strain ATCC BAA-871 / DC3000).